The following is a 309-amino-acid chain: Ketosamine-3-kinase (309 aa).

Ser20 is subject to Phosphoserine. Position 89-91 (89-91 (EHL)) interacts with ATP. Asp217 acts as the Proton acceptor in catalysis.

This sequence belongs to the fructosamine kinase family.

The catalysed reaction is N(6)-D-ribulosyl-L-lysyl-[protein] + ATP = N(6)-(3-O-phospho-D-ribulosyl)-L-lysyl-[protein] + ADP + H(+). The enzyme catalyses N(6)-(D-psicosyl)-L-lysyl-[protein] + ATP = N(6)-(3-O-phospho-D-psicosyl)-L-lysyl-[protein] + ADP + H(+). Functionally, ketosamine-3-kinase involved in protein deglycation by mediating phosphorylation of ribuloselysine and psicoselysine on glycated proteins, to generate ribuloselysine-3 phosphate and psicoselysine-3 phosphate, respectively. Ribuloselysine-3 phosphate and psicoselysine-3 phosphate adducts are unstable and decompose under physiological conditions. Not able to phosphorylate fructoselysine. The sequence is that of Ketosamine-3-kinase from Mus musculus (Mouse).